Consider the following 405-residue polypeptide: Cysteine desulfurase IscS (405 aa).

Residues 75–76 (AT), Asn-156, Gln-184, and 204–206 (SAH) each bind pyridoxal 5'-phosphate. An N6-(pyridoxal phosphate)lysine modification is found at Lys-207. Thr-244 lines the pyridoxal 5'-phosphate pocket. The active-site Cysteine persulfide intermediate is the Cys-329. Cys-329 lines the [2Fe-2S] cluster pocket.

The protein belongs to the class-V pyridoxal-phosphate-dependent aminotransferase family. NifS/IscS subfamily. In terms of assembly, homodimer. Forms a heterotetramer with IscU, interacts with other sulfur acceptors. Pyridoxal 5'-phosphate is required as a cofactor.

The protein resides in the cytoplasm. It carries out the reaction (sulfur carrier)-H + L-cysteine = (sulfur carrier)-SH + L-alanine. The protein operates within cofactor biosynthesis; iron-sulfur cluster biosynthesis. Its function is as follows. Master enzyme that delivers sulfur to a number of partners involved in Fe-S cluster assembly, tRNA modification or cofactor biosynthesis. Catalyzes the removal of elemental sulfur atoms from cysteine to produce alanine. Functions as a sulfur delivery protein for Fe-S cluster synthesis onto IscU, an Fe-S scaffold assembly protein, as well as other S acceptor proteins. The protein is Cysteine desulfurase IscS of Acinetobacter baumannii (strain AB307-0294).